Consider the following 339-residue polypeptide: Nicotinate-nucleotide--dimethylbenzimidazole phosphoribosyltransferase (339 aa).

The active-site Proton acceptor is glutamate 306.

It belongs to the CobT family.

It catalyses the reaction 5,6-dimethylbenzimidazole + nicotinate beta-D-ribonucleotide = alpha-ribazole 5'-phosphate + nicotinate + H(+). The protein operates within nucleoside biosynthesis; alpha-ribazole biosynthesis; alpha-ribazole from 5,6-dimethylbenzimidazole: step 1/2. In terms of biological role, catalyzes the synthesis of alpha-ribazole-5'-phosphate from nicotinate mononucleotide (NAMN) and 5,6-dimethylbenzimidazole (DMB). This chain is Nicotinate-nucleotide--dimethylbenzimidazole phosphoribosyltransferase, found in Brucella canis (strain ATCC 23365 / NCTC 10854 / RM-666).